A 2541-amino-acid chain; its full sequence is Talin-1 (2541 aa).

The 318-residue stretch at 86–403 folds into the FERM domain; sequence RPLKIRMLDG…GYIDIILKKK (318 aa). Residue Thr-167 is modified to Phosphothreonine. An interaction with LAYN region spans residues 280–435; it reads FQAHKNCGQM…PKKSTVLQQQ (156 aa). Residues Ser-405, Ser-425, Ser-446, Ser-620, and Ser-729 each carry the phosphoserine modification. Residues 482-655 form a helical bundle R1 region; it reads RGHMPPLTSA…QASGELLQQI (174 aa). Positions 656-786 are helical bundle R2; sequence GESDTDPHFQ…ALNELLQHVK (131 aa). Residues 787–911 are helical bundle R3; sequence AHATGAGPAG…NAAAQNAIKK (125 aa). The segment at 913–1044 is helical bundle R4; that stretch reads LVQRLEHAAK…RTAAQKAQEA (132 aa). Residue Ser-1021 is modified to Phosphoserine. Residues 1046 to 1206 form a helical bundle R5 region; it reads GPLEMDSALS…NRCVSCLPGQ (161 aa). Tyr-1116 is modified (phosphotyrosine). A Phosphothreonine modification is found at Thr-1142. Phosphoserine occurs at positions 1201 and 1225. Residues 1207–1357 form a helical bundle R6 region; it reads RDVDNALRAV…QLITMCTQQA (151 aa). Thr-1263 is modified (phosphothreonine). Ser-1323 and Ser-1328 each carry phosphoserine. Residues 1327–1948 are interaction with SYNM; it reads ASPNLKSQLA…CSPSDVYTKK (622 aa). The interval 1358-1453 is helical bundle R7A; Interaction with KANK1; that stretch reads PGQKECDNAL…AYLVGVSDPN (96 aa). Positions 1359–1659 are interaction with VCL and F-actin; that stretch reads GQKECDNALR…SMRDKAPGQL (301 aa). The interval 1461–1580 is helical bundle R8; that stretch reads LVEPTQFARA…NLSAFASNPE (120 aa). An N6-acetyllysine modification is found at Lys-1544. The interval 1581-1653 is helical bundle R7B; Interaction with KANK1; that stretch reads FSSVPAQISP…IKKLITSMRD (73 aa). The segment at 1655–1822 is helical bundle R9; that stretch reads APGQLECETA…TLNEAASAAG (168 aa). The interval 1823–1973 is helical bundle R10; the sequence is VVGGMVDSIT…VLAALQAGNR (151 aa). Ser-1849 carries the phosphoserine modification. Thr-1855 is subject to Phosphothreonine. Ser-1878 carries the post-translational modification Phosphoserine. Residues 1974 to 2140 are helical bundle R11; that stretch reads GTQACITAAS…TVKAVEDEAT (167 aa). Lys-2031 carries the post-translational modification N6-acetyllysine. Residue Ser-2040 is modified to Phosphoserine. The residue at position 2115 (Lys-2115) is an N6-acetyllysine. Residues 2141–2294 form a helical bundle R12 region; it reads KGTRALEATT…QAAEAMKGTE (154 aa). Residues 2293-2533 enclose the I/LWEQ domain; sequence TEWVDPEDPT…QIRQQQYKFL (241 aa). Positions 2300–2482 are helical bundle R13; that stretch reads DPTVIAENEL…AAQKAAAFED (183 aa).

As to quaternary structure, part of a complex composed of THSD1, PTK2/FAK1, TLN1 and VCL. Interacts with THSD1; this promotes interaction with PTK2/FAK1 and VCL. Interacts with NRAP and LAYN. Interacts with SYNM. Interacts with ITGB1; the interaction is prevented by competitive binding of ITGB1BP1. Binds with high affinity to VCL and with low affinity to integrins. Interacts with APBB1IP; this inhibits VCL binding. Interacts with PTK2/FAK1. Interacts with PIP5K1C. Interacts with F-actin. Interacts with SVEP1. Interacts (via R7 domain) with KANK1 or KANK2 (via KN motif); this interaction likely initiates the assembly of cortical microtubule stabilization complexes (CMSCs) at the vicinity of focal adhesions.

The protein resides in the cell projection. It is found in the ruffle membrane. Its subcellular location is the cytoplasm. The protein localises to the cytoskeleton. It localises to the cell surface. The protein resides in the cell junction. It is found in the focal adhesion. Functionally, high molecular weight cytoskeletal protein concentrated at regions of cell-matrix and cell-cell contacts. Involved in connections of major cytoskeletal structures to the plasma membrane. With KANK1 co-organize the assembly of cortical microtubule stabilizing complexes (CMSCs) positioned to control microtubule-actin crosstalk at focal adhesions (FAs) rims. This Mus musculus (Mouse) protein is Talin-1 (Tln1).